The sequence spans 399 residues: (R)-2-hydroxy-4-methylpentanoate CoA-transferase (399 aa).

The active-site Nucleophile is aspartate 171.

It belongs to the CoA-transferase III family. Homodimer.

It carries out the reaction 4-methylpentanoyl-CoA + (2R)-hydroxy-4-methylpentanoate = (R)-2-hydroxy-4-methylpentanoyl-CoA + 4-methylpentanoate. It participates in amino-acid degradation; L-leucine degradation. Its function is as follows. Involved in the reductive branch of L-leucine fermentation. Catalyzes the transfer of the CoA moiety from 4-methylpentanoyl-CoA (isocaproyl-CoA) to (R)-2-hydroxy-4-methylpentanoate ((R)-2-hydroxyisocaproate), leading to the formation of (R)-2-hydroxy-4-methylpentanoyl-CoA. Other CoA thioesters, such as acetyl-CoA or butyryl-CoA, are not accepted as substrates. In Clostridioides difficile (Peptoclostridium difficile), this protein is (R)-2-hydroxy-4-methylpentanoate CoA-transferase.